The sequence spans 232 residues: Ribonuclease 3 (232 aa).

The region spanning 5–134 (KKALLEQFDL…FLGALLLDKG (130 aa)) is the RNase III domain. Glutamate 47 is a binding site for Mg(2+). The active site involves aspartate 51. The Mg(2+) site is built by aspartate 120 and glutamate 123. Residue glutamate 123 is part of the active site. In terms of domain architecture, DRBM spans 160–229 (DYKTKLQELL…AKNAFEKESS (70 aa)). The tract at residues 203-232 (KSGQGQGRSKKLAEQEAAKNAFEKESSSCF) is disordered. Residues 213–232 (KLAEQEAAKNAFEKESSSCF) are compositionally biased toward basic and acidic residues.

This sequence belongs to the ribonuclease III family. In terms of assembly, homodimer. It depends on Mg(2+) as a cofactor.

Its subcellular location is the cytoplasm. It carries out the reaction Endonucleolytic cleavage to 5'-phosphomonoester.. Its function is as follows. Digests double-stranded RNA. Involved in the processing of primary rRNA transcript to yield the immediate precursors to the large and small rRNAs (23S and 16S). Processes some mRNAs, and tRNAs when they are encoded in the rRNA operon. Processes pre-crRNA and tracrRNA of type II CRISPR loci if present in the organism. The sequence is that of Ribonuclease 3 from Streptococcus sanguinis (strain SK36).